A 500-amino-acid chain; its full sequence is Cytochrome P450 monooxygenase acrD (500 aa).

Residues 13 to 32 (PYLSGTNLVWTLLLVGYIIP) form a helical membrane-spanning segment. N-linked (GlcNAc...) asparagine glycosylation is found at N210 and N414. C447 contacts heme.

This sequence belongs to the cytochrome P450 family. Heme is required as a cofactor.

It localises to the membrane. It participates in secondary metabolite biosynthesis. Its function is as follows. Cytochrome P450 monooxygenase; part of the cluster that mediates the biosynthesis of acurin A, a highly reduced polyketide coupled to a serine via a peptide bond. The activities of the highly reducing polyketide synthase acrA and the nonribosomal peptide synthetase acrB are collectively responsible for the synthesis of the acurin A core structure with a heptaketide backbone produced by acrA covalently fused to a L-serine by acrB. After the formation of the PK-NRP hybrid product, it is detached from acrB by reductive release to set up the formation of the lactam ring by aldol condensation. The hydrolyase acrC then catalyzes water loss to generate a double bond in the ring. This double bond is probably reduced, which is followed by three oxidations at C-22 to generate the carboxylic acid moiety, involving probably the FAD-binding monooxygenase acrE and the cytochrome P450 monooxygenases acrD and acrF. Finally, a last methylation step performed by the O-methyltransferase acrG leads to the production of acurin A. In Aspergillus aculeatus (strain ATCC 16872 / CBS 172.66 / WB 5094), this protein is Cytochrome P450 monooxygenase acrD.